The primary structure comprises 122 residues: Large ribosomal subunit protein bL19c (122 aa).

It belongs to the bacterial ribosomal protein bL19 family.

The protein localises to the plastid. It is found in the chloroplast. The sequence is that of Large ribosomal subunit protein bL19c (rpl19) from Rhodomonas salina (Cryptomonas salina).